Here is an 864-residue protein sequence, read N- to C-terminus: Protein translocase subunit SecA (864 aa).

ATP-binding positions include Gln-87, 105–109, and Asp-494; that span reads GEGKT. A disordered region spans residues 809–864; that stretch reads AKATELRHKEQPAELSYSGGDEDGAKTPSRRNAPKVGRNDPCPCGSGKKYKKCCGA. Positions 810 to 820 are enriched in basic and acidic residues; the sequence is KATELRHKEQP. Zn(2+) is bound by residues Cys-850, Cys-852, Cys-861, and Cys-862.

The protein belongs to the SecA family. As to quaternary structure, monomer and homodimer. Part of the essential Sec protein translocation apparatus which comprises SecA, SecYEG and auxiliary proteins SecDF-YajC and YidC. The cofactor is Zn(2+).

The protein resides in the cell inner membrane. It localises to the cytoplasm. It catalyses the reaction ATP + H2O + cellular proteinSide 1 = ADP + phosphate + cellular proteinSide 2.. Its function is as follows. Part of the Sec protein translocase complex. Interacts with the SecYEG preprotein conducting channel. Has a central role in coupling the hydrolysis of ATP to the transfer of proteins into and across the cell membrane, serving as an ATP-driven molecular motor driving the stepwise translocation of polypeptide chains across the membrane. The sequence is that of Protein translocase subunit SecA from Oleidesulfovibrio alaskensis (strain ATCC BAA-1058 / DSM 17464 / G20) (Desulfovibrio alaskensis).